The following is a 296-amino-acid chain: tRNA dimethylallyltransferase (296 aa).

11–18 (GPTAVGKT) contacts ATP. A substrate-binding site is contributed by 13-18 (TAVGKT). Positions 36–39 (DSQQ) are interaction with substrate tRNA.

This sequence belongs to the IPP transferase family. Monomer. Mg(2+) is required as a cofactor.

It carries out the reaction adenosine(37) in tRNA + dimethylallyl diphosphate = N(6)-dimethylallyladenosine(37) in tRNA + diphosphate. Catalyzes the transfer of a dimethylallyl group onto the adenine at position 37 in tRNAs that read codons beginning with uridine, leading to the formation of N6-(dimethylallyl)adenosine (i(6)A). In Streptococcus agalactiae serotype III (strain NEM316), this protein is tRNA dimethylallyltransferase.